Here is a 211-residue protein sequence, read N- to C-terminus: Ras-related protein Rab-38 (211 aa).

Positions 19, 20, 21, 22, 23, 24, 35, 36, 38, and 41 each coordinate GTP. Position 23 (T23) interacts with Mg(2+). The Switch 1 motif lies at 32 to 46 (QNFSSHYRATIGVDF). T41 and D65 together coordinate Mg(2+). GTP contacts are provided by G68, K128, D130, A160, and K161. A Switch 2 motif is present at residues 68 to 81 (GQERFGNMTRVYYR). C205 carries S-palmitoyl cysteine lipidation. C208 carries S-geranylgeranyl cysteine lipidation.

The protein belongs to the small GTPase superfamily. Rab family. As to quaternary structure, interacts with ANKRD27. The cofactor is Mg(2+). Post-translationally, although at least one in vitro system can process and methylate the prenylated C-terminal, in an in vitro system that normally express Rab-38 and in vivo the prenylated C-terminal is not proteolytically processed and not methylated. In terms of tissue distribution, expressed in melanocytes.

Its subcellular location is the cell membrane. It is found in the melanosome. The protein resides in the cytoplasmic vesicle. The protein localises to the phagosome. It localises to the phagosome membrane. Its subcellular location is the melanosome membrane. The catalysed reaction is GTP + H2O = GDP + phosphate + H(+). Regulated by guanine nucleotide exchange factors (GEFs) including the BLOC-3 complex composed of HPS1 and HPS4 which promote the exchange of bound GDP for free GTP. Regulated by GTPase activating proteins (GAPs) including SGSM2 which increase the GTP hydrolysis activity. Inhibited by GDP dissociation inhibitors (GDIs). Functionally, the small GTPases Rab are key regulators of intracellular membrane trafficking, from the formation of transport vesicles to their fusion with membranes. Rabs cycle between an inactive GDP-bound form and an active GTP-bound form that is able to recruit to membranes different sets of downstream effectors directly responsible for vesicle formation, movement, tethering and fusion. RAB38 may be involved in melanosomal transport and docking. Involved in the proper sorting of TYRP1. Involved in peripheral melanosomal distribution of TYRP1 in melanocytes; the function, which probably is implicating vesicle-trafficking, includes cooperation with ANKRD27 and VAMP7. Plays a role in the maturation of phagosomes that engulf pathogens, such as S.aureus and M.tuberculosis. Plays an important role in the control of melanin production and melanosome biogenesis. In concert with RAB32, regulates the proper trafficking of melanogenic enzymes TYR, TYRP1 and DCT/TYRP2 to melanosomes in melanocytes. This chain is Ras-related protein Rab-38, found in Homo sapiens (Human).